We begin with the raw amino-acid sequence, 322 residues long: Tetrahydromethanopterin S-methyltransferase subunit H (322 aa).

The protein belongs to the MtrH family. The complex is composed of 8 subunits; MtrA, MtrB, MtrC, MtrD, MtrE, MtrF, MtrG and MtrH.

It carries out the reaction 5-methyl-5,6,7,8-tetrahydromethanopterin + coenzyme M + 2 Na(+)(in) = 5,6,7,8-tetrahydromethanopterin + methyl-coenzyme M + 2 Na(+)(out). Its pathway is one-carbon metabolism; methanogenesis from CO(2); methyl-coenzyme M from 5,10-methylene-5,6,7,8-tetrahydromethanopterin: step 2/2. In terms of biological role, part of a complex that catalyzes the formation of methyl-coenzyme M and tetrahydromethanopterin from coenzyme M and methyl-tetrahydromethanopterin. This is an energy-conserving, sodium-ion translocating step. MtrH catalyzes the transfer of the methyl group from methyl-tetrahydromethanopterin to the corrinoid prosthetic group of MtrA. In Methanopyrus kandleri (strain AV19 / DSM 6324 / JCM 9639 / NBRC 100938), this protein is Tetrahydromethanopterin S-methyltransferase subunit H.